A 134-amino-acid chain; its full sequence is Transcription antitermination protein NusB (134 aa).

It belongs to the NusB family.

Functionally, involved in transcription antitermination. Required for transcription of ribosomal RNA (rRNA) genes. Binds specifically to the boxA antiterminator sequence of the ribosomal RNA (rrn) operons. The polypeptide is Transcription antitermination protein NusB (Shewanella loihica (strain ATCC BAA-1088 / PV-4)).